Consider the following 446-residue polypeptide: MADYLSVTQLTKYLKLKFDRDPYLERVYLTGQVSNFRKRPNHQYFSLKDEGAVIQATMWAGAYKKLGFDLEEGMKLNVVGRIQLYEPNGSYSIIIEKAEPDGIGALALQFEQLRQKLAGEGFFDERHKQALPQFVTKVGVVTSPSGAVIRDIITTISRRFPGVSILLFPTKVQGEGAAQEVAANIARANQREDLDLLIVGRGGGSIEDLWAFNEEIVVQAIFESRLPVISSVGHETDTTLADFVADRRAATPTAAAELATPITKTDIVSWIAEQQNRSYQACLRYIRQGQERVDKLSYSVMFRQPERLYDAYSQRLDRLTTSLMTTFKETLSEAKQEHLILEHRLASVNVQARLERYQDRLATAHRLLIANMTNQYDSKLAGFERAQAALLSLDTSRIIARGYALLKKDGAVAACVKDIKKGDHLSIVMRDGQLEVEVEDVNEKNI.

This sequence belongs to the XseA family. Heterooligomer composed of large and small subunits.

It is found in the cytoplasm. The enzyme catalyses Exonucleolytic cleavage in either 5'- to 3'- or 3'- to 5'-direction to yield nucleoside 5'-phosphates.. Bidirectionally degrades single-stranded DNA into large acid-insoluble oligonucleotides, which are then degraded further into small acid-soluble oligonucleotides. The protein is Exodeoxyribonuclease 7 large subunit of Streptococcus equi subsp. zooepidemicus (strain MGCS10565).